Reading from the N-terminus, the 564-residue chain is Septation ring formation regulator EzrA (564 aa).

At 1-2 (MV) the chain is on the extracellular side. Residues 3–21 (FVISVILAIIVILTIGLIL) form a helical membrane-spanning segment. Topologically, residues 22–564 (RKRIYDKVDH…IEENQLTLNR (543 aa)) are cytoplasmic. Coiled-coil stretches lie at residues 101–140 (ANNILTEGDQKLQNIEVKIEEILEELDELLSSEKTSREEV), 168–215 (FDKK…MEQF), 251–436 (GFDK…KKSN), and 468–537 (DIAK…ELSL).

Belongs to the EzrA family.

It localises to the cell membrane. Its function is as follows. Negative regulator of FtsZ ring formation; modulates the frequency and position of FtsZ ring formation. Inhibits FtsZ ring formation at polar sites. Interacts either with FtsZ or with one of its binding partners to promote depolymerization. The chain is Septation ring formation regulator EzrA from Oceanobacillus iheyensis (strain DSM 14371 / CIP 107618 / JCM 11309 / KCTC 3954 / HTE831).